A 250-amino-acid polypeptide reads, in one-letter code: Ribosomal RNA-processing protein 15 (250 aa).

Over residues 1-27 (MGSKHRVDTKDKKRTRKNAEFGREKRN) the composition is skewed to basic and acidic residues. Residues 1–101 (MGSKHRVDTK…NSKHDDGSTG (101 aa)) are disordered. Acidic residues-rich tracts occupy residues 43–53 (MEGDEAEEDEQ) and 67–83 (EQSD…EDDD). S69 is subject to Phosphoserine.

Belongs to the RRP15 family.

Its subcellular location is the nucleus. The protein localises to the nucleolus. Its function is as follows. Constituent of pre-60S ribosomal particles. Required for large subunit rRNA maturation, in particular processing of the 27S pre-rRNA at the A3 and B1 sites to yield 5.8S and 25S rRNA. The chain is Ribosomal RNA-processing protein 15 from Saccharomyces cerevisiae (strain ATCC 204508 / S288c) (Baker's yeast).